A 502-amino-acid chain; its full sequence is Protein MGF 505-5R (502 aa).

It belongs to the asfivirus MGF 505 family.

In terms of biological role, plays a role in virus cell tropism, and may be required for efficient virus replication in macrophages. The polypeptide is Protein MGF 505-5R (African swine fever virus (isolate Tick/Malawi/Lil 20-1/1983) (ASFV)).